Consider the following 297-residue polypeptide: 3-mercaptopyruvate sulfurtransferase (297 aa).

Alanine 2 is subject to N-acetylalanine. The Rhodanese 1 domain occupies 25 to 144; the sequence is SSQPLKLLDA…WLNQNLPISS (120 aa). At serine 35 the chain carries Phosphoserine. An N6-acetyllysine; alternate modification is found at lysine 40. Lysine 40 is modified (N6-succinyllysine; alternate). The interval 145–160 is hinge; the sequence is GKSHSEPAEFSAQLDP. N6-succinyllysine occurs at positions 146 and 164. A Rhodanese 2 domain is found at 174–288; sequence DARRFQVVDA…WYMRAQPEHI (115 aa). Residue arginine 188 coordinates substrate. Cysteine 248 functions as the Cysteine persulfide intermediate in the catalytic mechanism.

In terms of assembly, monomer (active form). Homodimer; disulfide-linked (inactive form). In terms of tissue distribution, expressed in the brain and retina. In the retina, localized to the inner and outer plexiform layer, the inner and outer nuclear layer and the outer segments of photoreceptors. In the brain, localized to neurons of mitral cell layers, glomerular, and external plexiform layers in the olfactory bulb. Also found in Purkinje cell stomata and proximal dendrites. In the spinal cord, localized to large neurons. In the cerebral cortex, localized to pyramidial neurons in layers II/III and V, and in layers I-VI of neocortical areas. In the hippocampus, found in CA1 and CA3 pyramidal cells.

Its subcellular location is the cytoplasm. It is found in the mitochondrion. The protein localises to the synapse. It localises to the synaptosome. It carries out the reaction 2-oxo-3-sulfanylpropanoate + [thioredoxin]-dithiol = [thioredoxin]-disulfide + hydrogen sulfide + pyruvate + H(+). Its activity is regulated as follows. By oxidative stress, and thioredoxin. Under oxidative stress conditions, the catalytic cysteine site is converted to a sulfenate which inhibits the MPST enzyme activity. Reduced thioredoxin cleaves an intersubunit disulfide bond to turn on the redox switch and reactivate the enzyme. Inhibited by different oxidants, hydrogen peroxide and tetrathionate. In terms of biological role, transfer of a sulfur ion to cyanide or to other thiol compounds. Also has weak rhodanese activity. Detoxifies cyanide and is required for thiosulfate biosynthesis. Acts as an antioxidant. In combination with cysteine aminotransferase (CAT), contributes to the catabolism of cysteine and is an important producer of hydrogen sulfide in the brain, retina and vascular endothelial cells. Hydrogen sulfide H(2)S is an important synaptic modulator, signaling molecule, smooth muscle contractor and neuroprotectant. Its production by the 3MST/CAT pathway is regulated by calcium ions. The polypeptide is 3-mercaptopyruvate sulfurtransferase (Mpst) (Mus musculus (Mouse)).